Reading from the N-terminus, the 189-residue chain is Peptidyl-tRNA hydrolase (189 aa).

Tyr-15 lines the tRNA pocket. The active-site Proton acceptor is His-20. Phe-66, Asn-68, and Asn-114 together coordinate tRNA.

This sequence belongs to the PTH family. In terms of assembly, monomer.

Its subcellular location is the cytoplasm. It catalyses the reaction an N-acyl-L-alpha-aminoacyl-tRNA + H2O = an N-acyl-L-amino acid + a tRNA + H(+). Functionally, hydrolyzes ribosome-free peptidyl-tRNAs (with 1 or more amino acids incorporated), which drop off the ribosome during protein synthesis, or as a result of ribosome stalling. Its function is as follows. Catalyzes the release of premature peptidyl moieties from peptidyl-tRNA molecules trapped in stalled 50S ribosomal subunits, and thus maintains levels of free tRNAs and 50S ribosomes. The sequence is that of Peptidyl-tRNA hydrolase from Streptococcus equi subsp. zooepidemicus (strain H70).